Reading from the N-terminus, the 228-residue chain is Cytokinin riboside 5'-monophosphate phosphoribohydrolase LOG5 (228 aa).

Substrate is bound by residues glutamate 79, 97 to 98, and 114 to 120; these read RK and GYGTLEE.

The protein belongs to the LOG family. As to expression, expressed in roots and shoots. Detected in vascular tissues of roots, cotyledons, and leaves, axillary buds, immature and mature flowers, fruit abscission zones and ovules.

Its subcellular location is the cytoplasm. The protein resides in the nucleus. The catalysed reaction is N(6)-(dimethylallyl)adenosine 5'-phosphate + H2O = N(6)-dimethylallyladenine + D-ribose 5-phosphate. The enzyme catalyses 9-ribosyl-trans-zeatin 5'-phosphate + H2O = trans-zeatin + D-ribose 5-phosphate. In terms of biological role, cytokinin-activating enzyme working in the direct activation pathway. Phosphoribohydrolase that converts inactive cytokinin nucleotides to the biologically active free-base forms. The chain is Cytokinin riboside 5'-monophosphate phosphoribohydrolase LOG5 (LOG5) from Arabidopsis thaliana (Mouse-ear cress).